The following is a 187-amino-acid chain: MEKKETKSESEKTNKQDNKNTKSQKKENLNLVNSDKKIAELENEISNLKDLYLRKQAEFENFRKRLEKEKDNFVKFANETIMKDVVNFLDNLERAINSSKKSKDFDNLLTGISMIENEILSIFDKKYNLKKFGENGENFDPSRHEAISIEEKEGLKNPEIVEVYQKGYCYNDRILRTAKVKVAQSKN.

The segment at 1–30 (MEKKETKSESEKTNKQDNKNTKSQKKENLN) is disordered.

This sequence belongs to the GrpE family. As to quaternary structure, homodimer.

The protein localises to the cytoplasm. In terms of biological role, participates actively in the response to hyperosmotic and heat shock by preventing the aggregation of stress-denatured proteins, in association with DnaK and GrpE. It is the nucleotide exchange factor for DnaK and may function as a thermosensor. Unfolded proteins bind initially to DnaJ; upon interaction with the DnaJ-bound protein, DnaK hydrolyzes its bound ATP, resulting in the formation of a stable complex. GrpE releases ADP from DnaK; ATP binding to DnaK triggers the release of the substrate protein, thus completing the reaction cycle. Several rounds of ATP-dependent interactions between DnaJ, DnaK and GrpE are required for fully efficient folding. In Borreliella burgdorferi (strain ATCC 35210 / DSM 4680 / CIP 102532 / B31) (Borrelia burgdorferi), this protein is Protein GrpE.